The sequence spans 145 residues: Eukaryotic translation initiation factor 1A (145 aa).

The span at 1–15 (MPKNKGKGGKNRKRG) shows a compositional bias: basic residues. A disordered region spans residues 1–25 (MPKNKGKGGKNRKRGKNEADDDKRE). Residues 16–25 (KNEADDDKRE) are compositionally biased toward basic and acidic residues. Residues 22–96 (DKRELVFKED…DKADVILKLM (75 aa)) form the S1-like domain.

Belongs to the eIF-1A family.

Its function is as follows. Seems to be required for maximal rate of protein biosynthesis. Enhances ribosome dissociation into subunits and stabilizes the binding of the initiator Met-tRNA(I) to 40 S ribosomal subunits. The protein is Eukaryotic translation initiation factor 1A of Onobrychis viciifolia (Common sainfoin).